The sequence spans 647 residues: DNA mismatch repair protein MutL (647 aa).

Positions 389–423 (SESSVSSVANKQQPTVKQAKRSADDSDSEHGKLDY) are disordered. Residues 409–423 (RSADDSDSEHGKLDY) show a composition bias toward basic and acidic residues.

This sequence belongs to the DNA mismatch repair MutL/HexB family.

This protein is involved in the repair of mismatches in DNA. It is required for dam-dependent methyl-directed DNA mismatch repair. May act as a 'molecular matchmaker', a protein that promotes the formation of a stable complex between two or more DNA-binding proteins in an ATP-dependent manner without itself being part of a final effector complex. The protein is DNA mismatch repair protein MutL of Streptococcus thermophilus (strain ATCC BAA-491 / LMD-9).